Here is a 127-residue protein sequence, read N- to C-terminus: Aspartate 1-decarboxylase (127 aa).

Ser25 acts as the Schiff-base intermediate with substrate; via pyruvic acid in catalysis. Ser25 carries the post-translational modification Pyruvic acid (Ser). Position 57 (Thr57) interacts with substrate. Tyr58 (proton donor) is an active-site residue. 73 to 75 (GAA) is a substrate binding site.

This sequence belongs to the PanD family. Heterooctamer of four alpha and four beta subunits. The cofactor is pyruvate. Post-translationally, is synthesized initially as an inactive proenzyme, which is activated by self-cleavage at a specific serine bond to produce a beta-subunit with a hydroxyl group at its C-terminus and an alpha-subunit with a pyruvoyl group at its N-terminus.

The protein resides in the cytoplasm. The catalysed reaction is L-aspartate + H(+) = beta-alanine + CO2. Its pathway is cofactor biosynthesis; (R)-pantothenate biosynthesis; beta-alanine from L-aspartate: step 1/1. Catalyzes the pyruvoyl-dependent decarboxylation of aspartate to produce beta-alanine. The polypeptide is Aspartate 1-decarboxylase (Vesicomyosocius okutanii subsp. Calyptogena okutanii (strain HA)).